Consider the following 583-residue polypeptide: Protein translocase subunit SecD (583 aa).

The next 6 membrane-spanning stretches (helical) occupy residues 7–27, 419–439, 446–468, 469–489, 511–531, and 538–558; these read FGVVLVVLAACSGFLFPTLQW, LVWGLCAVLLFMLVWYQEAGV, LLNLYIMFGVLSAFNLTLTLSSI, AGMILTIGMAVDANVVVFERI, FWAIMDSNVTTFIAALFLSVL, and GFAYSLAIGVVSSVFTALFVS.

The protein belongs to the SecD/SecF family. SecD subfamily. As to quaternary structure, forms a complex with SecF. Part of the essential Sec protein translocation apparatus which comprises SecA, SecYEG and auxiliary proteins SecDF. Other proteins may also be involved.

Its subcellular location is the cell inner membrane. In terms of biological role, part of the Sec protein translocase complex. Interacts with the SecYEG preprotein conducting channel. SecDF uses the proton motive force (PMF) to complete protein translocation after the ATP-dependent function of SecA. This is Protein translocase subunit SecD from Treponema pallidum (strain Nichols).